The primary structure comprises 240 residues: 1-(5-phosphoribosyl)-5-[(5-phosphoribosylamino)methylideneamino] imidazole-4-carboxamide isomerase (240 aa).

Asp8 functions as the Proton acceptor in the catalytic mechanism. Catalysis depends on Asp129, which acts as the Proton donor.

The protein belongs to the HisA/HisF family.

The protein resides in the cytoplasm. The catalysed reaction is 1-(5-phospho-beta-D-ribosyl)-5-[(5-phospho-beta-D-ribosylamino)methylideneamino]imidazole-4-carboxamide = 5-[(5-phospho-1-deoxy-D-ribulos-1-ylimino)methylamino]-1-(5-phospho-beta-D-ribosyl)imidazole-4-carboxamide. The protein operates within amino-acid biosynthesis; L-histidine biosynthesis; L-histidine from 5-phospho-alpha-D-ribose 1-diphosphate: step 4/9. This Clostridium beijerinckii (strain ATCC 51743 / NCIMB 8052) (Clostridium acetobutylicum) protein is 1-(5-phosphoribosyl)-5-[(5-phosphoribosylamino)methylideneamino] imidazole-4-carboxamide isomerase.